The chain runs to 449 residues: Glucose-6-phosphate isomerase (449 aa).

Catalysis depends on glutamate 291, which acts as the Proton donor. Residues histidine 312 and lysine 426 contribute to the active site.

This sequence belongs to the GPI family.

It localises to the cytoplasm. The enzyme catalyses alpha-D-glucose 6-phosphate = beta-D-fructose 6-phosphate. Its pathway is carbohydrate biosynthesis; gluconeogenesis. The protein operates within carbohydrate degradation; glycolysis; D-glyceraldehyde 3-phosphate and glycerone phosphate from D-glucose: step 2/4. Functionally, catalyzes the reversible isomerization of glucose-6-phosphate to fructose-6-phosphate. In Streptococcus pyogenes serotype M49 (strain NZ131), this protein is Glucose-6-phosphate isomerase.